A 339-amino-acid polypeptide reads, in one-letter code: tRNA (cytidine(56)-2'-O)-methyltransferase (339 aa).

S-adenosyl-L-methionine contacts are provided by residues Leu-79 and 105–109 (GSEKV). Residues 188–295 (LIEHVKAVEG…VAQADNLFAG (108 aa)) form the HD domain.

The protein belongs to the aTrm56 family. Homodimer.

Its subcellular location is the cytoplasm. It carries out the reaction cytidine(56) in tRNA + S-adenosyl-L-methionine = 2'-O-methylcytidine(56) in tRNA + S-adenosyl-L-homocysteine + H(+). In terms of biological role, specifically catalyzes the AdoMet-dependent 2'-O-ribose methylation of cytidine at position 56 in tRNAs. This is tRNA (cytidine(56)-2'-O)-methyltransferase from Thermoplasma acidophilum (strain ATCC 25905 / DSM 1728 / JCM 9062 / NBRC 15155 / AMRC-C165).